The primary structure comprises 367 residues: Peptide chain release factor 2 (367 aa).

An N5-methylglutamine modification is found at Gln250.

It belongs to the prokaryotic/mitochondrial release factor family. In terms of processing, methylated by PrmC. Methylation increases the termination efficiency of RF2.

Its subcellular location is the cytoplasm. Its function is as follows. Peptide chain release factor 2 directs the termination of translation in response to the peptide chain termination codons UGA and UAA. In Chloroflexus aggregans (strain MD-66 / DSM 9485), this protein is Peptide chain release factor 2.